The primary structure comprises 399 residues: S-adenosylmethionine synthase (399 aa).

H16 is an ATP binding site. Position 18 (D18) interacts with Mg(2+). Residue E44 coordinates K(+). L-methionine contacts are provided by E57 and Q100. Residues 100–110 (QSPDIAQGVDT) form a flexible loop region. ATP is bound by residues 175-177 (DGK), 246-247 (KF), D255, 261-262 (RK), A278, and K282. D255 serves as a coordination point for L-methionine. Residue K286 participates in L-methionine binding. An Isoglutamyl lysine isopeptide (Lys-Gln) (interchain with Q-Cter in protein Pup) cross-link involves residue K341.

The protein belongs to the AdoMet synthase family. Homotetramer; dimer of dimers. It depends on Mg(2+) as a cofactor. The cofactor is K(+).

It localises to the cytoplasm. It carries out the reaction L-methionine + ATP + H2O = S-adenosyl-L-methionine + phosphate + diphosphate. It functions in the pathway amino-acid biosynthesis; S-adenosyl-L-methionine biosynthesis; S-adenosyl-L-methionine from L-methionine: step 1/1. In terms of biological role, catalyzes the formation of S-adenosylmethionine (AdoMet) from methionine and ATP. The overall synthetic reaction is composed of two sequential steps, AdoMet formation and the subsequent tripolyphosphate hydrolysis which occurs prior to release of AdoMet from the enzyme. The polypeptide is S-adenosylmethionine synthase (Mycolicibacterium smegmatis (strain ATCC 700084 / mc(2)155) (Mycobacterium smegmatis)).